A 589-amino-acid chain; its full sequence is Protein kinase G11A (589 aa).

The disordered stretch occupies residues 1–167; sequence MASKAMPRAP…SACSSISSVT (167 aa). Composition is skewed to polar residues over residues 15-36 and 63-76; these read NLQS…SPSK and TQHQ…TGSN. Residues 91–100 show a composition bias toward basic and acidic residues; sequence RLADEEKGVV. A compositionally biased stretch (low complexity) spans 142–165; that stretch reads SSSRCRPSTSSDVSDESACSSISS. The region spanning 195 to 533 is the Protein kinase domain; the sequence is FKLLKKLGCG…ATEIKQHPFF (339 aa). Residues 201–209 and K224 contribute to the ATP site; that span reads LGCGDIGSV. Catalysis depends on D320, which acts as the Proton acceptor. The tract at residues 551 to 589 is disordered; sequence RPVEIERPPKQPVSTSEPAAAPSDAAQKSSDSYLEFDFF.

It belongs to the protein kinase superfamily. Ser/Thr protein kinase family.

The enzyme catalyses L-seryl-[protein] + ATP = O-phospho-L-seryl-[protein] + ADP + H(+). It catalyses the reaction L-threonyl-[protein] + ATP = O-phospho-L-threonyl-[protein] + ADP + H(+). In terms of biological role, may play a role in the regulation of metabolism and signal transduction processes. In Oryza sativa subsp. japonica (Rice), this protein is Protein kinase G11A.